Here is a 293-residue protein sequence, read N- to C-terminus: Elongation factor Ts (293 aa).

The segment at 79-82 (TDFV) is involved in Mg(2+) ion dislocation from EF-Tu.

This sequence belongs to the EF-Ts family.

It localises to the cytoplasm. In terms of biological role, associates with the EF-Tu.GDP complex and induces the exchange of GDP to GTP. It remains bound to the aminoacyl-tRNA.EF-Tu.GTP complex up to the GTP hydrolysis stage on the ribosome. The polypeptide is Elongation factor Ts (Macrococcus caseolyticus (strain JCSC5402) (Macrococcoides caseolyticum)).